The primary structure comprises 97 residues: Putative pterin-4-alpha-carbinolamine dehydratase (97 aa).

The protein belongs to the pterin-4-alpha-carbinolamine dehydratase family.

The catalysed reaction is (4aS,6R)-4a-hydroxy-L-erythro-5,6,7,8-tetrahydrobiopterin = (6R)-L-erythro-6,7-dihydrobiopterin + H2O. This chain is Putative pterin-4-alpha-carbinolamine dehydratase, found in Brucella abortus (strain S19).